A 203-amino-acid polypeptide reads, in one-letter code: Large ribosomal subunit protein bL25 (203 aa).

Belongs to the bacterial ribosomal protein bL25 family. CTC subfamily. As to quaternary structure, part of the 50S ribosomal subunit; part of the 5S rRNA/L5/L18/L25 subcomplex. Contacts the 5S rRNA. Binds to the 5S rRNA independently of L5 and L18.

Its function is as follows. This is one of the proteins that binds to the 5S RNA in the ribosome where it forms part of the central protuberance. The chain is Large ribosomal subunit protein bL25 from Xanthobacter autotrophicus (strain ATCC BAA-1158 / Py2).